The primary structure comprises 128 residues: MPMAPRVLLLCLLGLAVTEGHSPETAIPGCHLHPFNVTVRSDRLGTCQGSHVAQACVGHCESSAFPSRYSVLVASGYRHNITSSSQCCTISSLRKVRVWLQCVGNQRGELEIFTARACQCDMCRFSRY.

The N-terminal stretch at 1-20 (MPMAPRVLLLCLLGLAVTEG) is a signal peptide. 4 cysteine pairs are disulfide-bonded: Cys30–Cys88, Cys47–Cys102, Cys56–Cys118, and Cys60–Cys120. Residues Asn36 and Asn80 are each glycosylated (N-linked (GlcNAc...) asparagine).

It belongs to the glycoprotein hormones subunit alpha family. Heterodimer with GPHB5; this heterodimer interacts with thyroid-stimulating hormone receptor (TSHR), and hence stimulates cAMP production.

Its subcellular location is the secreted. Its function is as follows. Functions as a heterodimeric glycoprotein hormone with GPHB5 able to bind and activate the thyroid-stimulating hormone receptor (TSHR), leading to increased cAMP production. Plays a central role in controlling thyroid cell metabolism. The sequence is that of Glycoprotein hormone alpha-2 (Gpha2) from Mus musculus (Mouse).